The following is a 427-amino-acid chain: Adenylosuccinate synthetase (427 aa).

GTP-binding positions include 12-18 (GDEGKGK) and 40-42 (GHT). Asp13 acts as the Proton acceptor in catalysis. Asp13 and Gly40 together coordinate Mg(2+). IMP-binding positions include 13-16 (DEGK), 38-41 (NAGH), Thr128, Arg142, Gln223, Thr238, and Arg302. Catalysis depends on His41, which acts as the Proton donor. Position 298-304 (298-304 (TTTGRPR)) interacts with substrate. Residues Arg304, 330–332 (SID), and 412–414 (SVG) each bind GTP.

Belongs to the adenylosuccinate synthetase family. Homodimer. The cofactor is Mg(2+).

It localises to the cytoplasm. It carries out the reaction IMP + L-aspartate + GTP = N(6)-(1,2-dicarboxyethyl)-AMP + GDP + phosphate + 2 H(+). Its pathway is purine metabolism; AMP biosynthesis via de novo pathway; AMP from IMP: step 1/2. In terms of biological role, plays an important role in the de novo pathway of purine nucleotide biosynthesis. Catalyzes the first committed step in the biosynthesis of AMP from IMP. This chain is Adenylosuccinate synthetase, found in Staphylococcus aureus (strain N315).